A 135-amino-acid polypeptide reads, in one-letter code: CTP pyrophosphohydrolase (135 aa).

The region spanning 2–127 (KMIEVVAAII…DIPLLEAFMA (126 aa)) is the Nudix hydrolase domain. Substrate contacts are provided by residues 34–39 (FAGGKV), Arg72, and Asp118. Residues 37–58 (GKVEPDESQRQALVRELREELG) carry the Nudix box motif.

The protein belongs to the Nudix hydrolase family. In terms of assembly, monomer. Mg(2+) is required as a cofactor. It depends on Mn(2+) as a cofactor.

The enzyme catalyses CTP + H2O = CMP + diphosphate + H(+). The catalysed reaction is dCTP + H2O = dCMP + diphosphate + H(+). Its function is as follows. Hydrolase with a preference for pyrimidine substrates. Has high activity with 5-methyl-dCTP, and much lower activity with CTP, dCTP, 5-hydroxy-dCTP, 2-hydroxy-dATP and 8-hydroxy-dGTP. The protein is CTP pyrophosphohydrolase (nudG) of Escherichia coli (strain K12).